The following is a 194-amino-acid chain: Phosphoheptose isomerase (194 aa).

Positions 37–194 (ISDSFKQGGK…LIEFEMAKDV (158 aa)) constitute an SIS domain. Position 52–54 (52–54 (NGG)) interacts with substrate. Positions 61 and 65 each coordinate Zn(2+). Substrate is bound by residues glutamate 65, 93-94 (ND), 119-121 (STS), serine 124, and glutamine 172. Residues glutamine 172 and histidine 180 each contribute to the Zn(2+) site.

The protein belongs to the SIS family. GmhA subfamily. As to quaternary structure, homotetramer. The cofactor is Zn(2+).

The protein localises to the cytoplasm. It catalyses the reaction 2 D-sedoheptulose 7-phosphate = D-glycero-alpha-D-manno-heptose 7-phosphate + D-glycero-beta-D-manno-heptose 7-phosphate. It functions in the pathway carbohydrate biosynthesis; D-glycero-D-manno-heptose 7-phosphate biosynthesis; D-glycero-alpha-D-manno-heptose 7-phosphate and D-glycero-beta-D-manno-heptose 7-phosphate from sedoheptulose 7-phosphate: step 1/1. Functionally, catalyzes the isomerization of sedoheptulose 7-phosphate in D-glycero-D-manno-heptose 7-phosphate. This is Phosphoheptose isomerase from Actinobacillus succinogenes (strain ATCC 55618 / DSM 22257 / CCUG 43843 / 130Z).